Reading from the N-terminus, the 226-residue chain is Leucyl/phenylalanyl-tRNA--protein transferase (226 aa).

This sequence belongs to the L/F-transferase family.

The protein resides in the cytoplasm. The catalysed reaction is N-terminal L-lysyl-[protein] + L-leucyl-tRNA(Leu) = N-terminal L-leucyl-L-lysyl-[protein] + tRNA(Leu) + H(+). It carries out the reaction N-terminal L-arginyl-[protein] + L-leucyl-tRNA(Leu) = N-terminal L-leucyl-L-arginyl-[protein] + tRNA(Leu) + H(+). The enzyme catalyses L-phenylalanyl-tRNA(Phe) + an N-terminal L-alpha-aminoacyl-[protein] = an N-terminal L-phenylalanyl-L-alpha-aminoacyl-[protein] + tRNA(Phe). Its function is as follows. Functions in the N-end rule pathway of protein degradation where it conjugates Leu, Phe and, less efficiently, Met from aminoacyl-tRNAs to the N-termini of proteins containing an N-terminal arginine or lysine. In Pseudomonas putida (strain W619), this protein is Leucyl/phenylalanyl-tRNA--protein transferase.